The primary structure comprises 156 residues: 3-dehydroquinate dehydratase 1 (156 aa).

The active-site Proton acceptor is the Tyr32. Positions 84, 90, and 97 each coordinate substrate. The Proton donor role is filled by His110. Residues 111 to 112 (LS) and Arg121 each bind substrate.

It belongs to the type-II 3-dehydroquinase family. Homododecamer.

It carries out the reaction 3-dehydroquinate = 3-dehydroshikimate + H2O. It participates in metabolic intermediate biosynthesis; chorismate biosynthesis; chorismate from D-erythrose 4-phosphate and phosphoenolpyruvate: step 3/7. Catalyzes a trans-dehydration via an enolate intermediate. This Ralstonia nicotianae (strain ATCC BAA-1114 / GMI1000) (Ralstonia solanacearum) protein is 3-dehydroquinate dehydratase 1 (aroQ1).